The primary structure comprises 443 residues: Citrate transporter CitP (443 aa).

Transmembrane regions (helical) follow at residues 27–47 (ISGIGLVRYAFMAVLLIIAIS), 59–79 (IFALVLMGHVFYYLGAHLPIF), 83–103 (LGGGSVFTILLTAILVATNVM), 114–134 (FINGMDFLGLYIVSLIASSLF), 151–171 (VAFISMALTAVVIGIVGVIIG), 177–197 (AILYIAMPIMAGGVGAGIVPL), 209–229 (SAGILSKLFPTVILGNLLAII), 268–288 (YVQLGVGLIIAVMFFMIGTML), 294–314 (GINAYAFIILSIVLTKAFGLL), 322–342 (VIMFGQVIVKNMTHALLAGVG), 350–370 (VLLAALSWQFVVLCLVSIVAI), 388–410 (AAITAGLANNSMGGTGNVAVLAA), and 422–442 (MGNRIGGALILVVAGILVTFM).

Belongs to the 2-hydroxycarboxylate transporter (2-HCT) (TC 2.A.24) family.

Its subcellular location is the cell membrane. It catalyses the reaction (R)-lactate(in) + citrate(out) = (R)-lactate(out) + citrate(in). It carries out the reaction (S)-lactate(in) + citrate(out) = (S)-lactate(out) + citrate(in). The enzyme catalyses citrate(in) + H(+)(in) = citrate(out) + H(+)(out). With respect to regulation, uptake of citrate is not affected by the absence or presence of Na(+) up to 25 mM and is increasingly inhibited by increasing Mg(2+) concentrations. Its function is as follows. Secondary transporter involved in citrate metabolism. During cometabolism of citrate and glucose, catalyzes the uptake of divalent citrate into the cell coupled to the exit of monovalent lactate, a product of citrate fermentation during citrate-glucose cometabolism (precursor/product exchange). The citrate/lactate exchange is electrogenic and results in the generation of a membrane potential. In the absence of glucose, i.e. when no lactate is produced, CitP catalyzes the proton-dependent transport of citrate and malate. Transports the divalent form of citrate and malate with the concomitant uptake of one proton, therefore translocating a single unit of negative charge across the membrane. In vitro, transports a range of substrates that contain the 2-hydroxycarboxylate motif, HO-CR(2)-COO(-), with a preference for malate, citrate and monovalent 2-hydroxyisobutyrate. Modification of the OH or the COO(-) groups of the 2-hydroxycarboxylate motif drastically reduces the affinity of the transporter for the substrates, indicating their relevance in substrate recognition. Significant activity is also observed with some 2-oxocarboxylates and a 3-hydroxycarboxylate. The chain is Citrate transporter CitP from Leuconostoc mesenteroides subsp. mesenteroides.